Consider the following 461-residue polypeptide: Cysteine--tRNA ligase (461 aa).

Zn(2+) is bound at residue cysteine 31. The 'HIGH' region motif lies at 33–43 (PTVYDFAHIGN). Zn(2+) is bound by residues cysteine 219, histidine 244, and glutamate 248. The short motif at 277–281 (KMSKS) is the 'KMSKS' region element. Residue lysine 280 coordinates ATP. Positions 436–452 (SEKGIQLKDGKDKETGE) are enriched in basic and acidic residues. Residues 436–461 (SEKGIQLKDGKDKETGERTTTWELKR) form a disordered region.

Belongs to the class-I aminoacyl-tRNA synthetase family. As to quaternary structure, monomer. The cofactor is Zn(2+).

It localises to the cytoplasm. The enzyme catalyses tRNA(Cys) + L-cysteine + ATP = L-cysteinyl-tRNA(Cys) + AMP + diphosphate. This Agrobacterium fabrum (strain C58 / ATCC 33970) (Agrobacterium tumefaciens (strain C58)) protein is Cysteine--tRNA ligase.